The primary structure comprises 376 residues: Dual-specificity RNA methyltransferase RlmN (376 aa).

Catalysis depends on E95, which acts as the Proton acceptor. A Radical SAM core domain is found at E101–D339. An intrachain disulfide couples C108 to C344. Positions 115, 119, and 122 each coordinate [4Fe-4S] cluster. S-adenosyl-L-methionine-binding positions include G169–E170, S201, S223–H225, and N301. The active-site S-methylcysteine intermediate is C344.

Belongs to the radical SAM superfamily. RlmN family. The cofactor is [4Fe-4S] cluster.

The protein localises to the cytoplasm. It catalyses the reaction adenosine(2503) in 23S rRNA + 2 reduced [2Fe-2S]-[ferredoxin] + 2 S-adenosyl-L-methionine = 2-methyladenosine(2503) in 23S rRNA + 5'-deoxyadenosine + L-methionine + 2 oxidized [2Fe-2S]-[ferredoxin] + S-adenosyl-L-homocysteine. The enzyme catalyses adenosine(37) in tRNA + 2 reduced [2Fe-2S]-[ferredoxin] + 2 S-adenosyl-L-methionine = 2-methyladenosine(37) in tRNA + 5'-deoxyadenosine + L-methionine + 2 oxidized [2Fe-2S]-[ferredoxin] + S-adenosyl-L-homocysteine. Functionally, specifically methylates position 2 of adenine 2503 in 23S rRNA and position 2 of adenine 37 in tRNAs. m2A2503 modification seems to play a crucial role in the proofreading step occurring at the peptidyl transferase center and thus would serve to optimize ribosomal fidelity. In Pseudoalteromonas translucida (strain TAC 125), this protein is Dual-specificity RNA methyltransferase RlmN.